Reading from the N-terminus, the 612-residue chain is FAD-linked oxidoreductase notD' (612 aa).

Positions 1–19 (MRDIRELLLVLFTSCLALG) are cleaved as a signal peptide. Asn-50, Asn-86, and Asn-109 each carry an N-linked (GlcNAc...) asparagine glycan. Residues 124–307 (GQGRIPRYSA…TSITMPVFGA (184 aa)) form the FAD-binding PCMH-type domain. N-linked (GlcNAc...) asparagine glycosylation is found at Asn-311 and Asn-396.

The protein belongs to the oxygen-dependent FAD-linked oxidoreductase family. FAD serves as cofactor.

Its pathway is alkaloid biosynthesis. In terms of biological role, FAD-linked oxidoreductase; part of the gene cluster that mediates the biosynthesis of notoamide, a fungal indole alkaloid that belongs to a family of natural products containing a characteristic bicyclo[2.2.2]diazaoctane core. The first step of notoamide biosynthesis involves coupling of L-proline and L-tryptophan by the bimodular NRPS notE', to produce cyclo-L-tryptophan-L-proline called brevianamide F. The reverse prenyltransferase notF' then acts as a deoxybrevianamide E synthase and converts brevianamide F to deoxybrevianamide E via reverse prenylation at C-2 of the indole ring leading to the bicyclo[2.2.2]diazaoctane core. Deoxybrevianamide E is further hydroxylated at C-6 of the indole ring, likely catalyzed by the cytochrome P450 monooxygenase notG', to yield 6-hydroxy-deoxybrevianamide E. 6-hydroxy-deoxybrevianamide E is a specific substrate of the prenyltransferase notC' for normal prenylation at C-7 to produce 6-hydroxy-7-prenyl-deoxybrevianamide, also called notoamide S. As the proposed pivotal branching point in notoamide biosynthesis, notoamide S can be diverted to notoamide E through an oxidative pyran ring closure putatively catalyzed by either notH' cytochrome P450 monooxygenase or the notD' FAD-linked oxidoreductase. This step would be followed by an indole 2,3-epoxidation-initiated pinacol-like rearrangement catalyzed by the notB' FAD-dependent monooxygenase leading to the formation of notoamide C and notoamide D. On the other hand notoamide S is converted to notoamide T by notH' (or notD'), a bifunctional oxidase that also functions as the intramolecular Diels-Alderase responsible for generation of (-)-notoamide T. To generate antipodal (+)-notoaminide T, notH (or notD) in Aspergillus strain MF297-2 is expected to catalyze a Diels-Alder reaction leading to the opposite stereochemistry. The remaining oxidoreductase notD' (or notH') likely catalyzes the oxidative pyran ring formation to yield (-)-stephacidin A. The FAD-dependent monooxygenase notI' is highly similar to notB' and is predicted to catalyze a similar conversion from (-)-stephacidin A to (+)-notoamide B via the 2,3-epoxidation of (-)-stephacidin A followed by a pinacol-type rearrangement. Finally, it remains unclear which enzyme could be responsible for the final hydroxylation steps leading to notoamide A and sclerotiamide. The sequence is that of FAD-linked oxidoreductase notD' from Aspergillus versicolor.